The primary structure comprises 361 residues: Peptide chain release factor 1 (361 aa).

The residue at position 240 (Q240) is an N5-methylglutamine.

This sequence belongs to the prokaryotic/mitochondrial release factor family. Post-translationally, methylated by PrmC. Methylation increases the termination efficiency of RF1.

It localises to the cytoplasm. Functionally, peptide chain release factor 1 directs the termination of translation in response to the peptide chain termination codons UAG and UAA. In Mycobacterium leprae (strain Br4923), this protein is Peptide chain release factor 1.